Here is a 359-residue protein sequence, read N- to C-terminus: Probable dual-specificity RNA methyltransferase RlmN (359 aa).

The active-site Proton acceptor is E91. One can recognise a Radical SAM core domain in the interval 97–329 (QHYGHSVCVT…KKNGVNCVVR (233 aa)). An intrachain disulfide couples C104 to C340. Residues C111, C115, and C118 each contribute to the [4Fe-4S] cluster site. Residues 163 to 164 (GE), S195, 218 to 220 (SLH), and N296 each bind S-adenosyl-L-methionine. The S-methylcysteine intermediate role is filled by C340.

The protein belongs to the radical SAM superfamily. RlmN family. It depends on [4Fe-4S] cluster as a cofactor.

It is found in the cytoplasm. It catalyses the reaction adenosine(2503) in 23S rRNA + 2 reduced [2Fe-2S]-[ferredoxin] + 2 S-adenosyl-L-methionine = 2-methyladenosine(2503) in 23S rRNA + 5'-deoxyadenosine + L-methionine + 2 oxidized [2Fe-2S]-[ferredoxin] + S-adenosyl-L-homocysteine. It carries out the reaction adenosine(37) in tRNA + 2 reduced [2Fe-2S]-[ferredoxin] + 2 S-adenosyl-L-methionine = 2-methyladenosine(37) in tRNA + 5'-deoxyadenosine + L-methionine + 2 oxidized [2Fe-2S]-[ferredoxin] + S-adenosyl-L-homocysteine. Specifically methylates position 2 of adenine 2503 in 23S rRNA and position 2 of adenine 37 in tRNAs. The protein is Probable dual-specificity RNA methyltransferase RlmN of Streptococcus pyogenes serotype M5 (strain Manfredo).